A 400-amino-acid chain; its full sequence is Acetylornithine aminotransferase (400 aa).

Pyridoxal 5'-phosphate is bound by residues 106–107 (GA) and Phe132. Arg135 is a binding site for N(2)-acetyl-L-ornithine. 217-220 (DEVQ) provides a ligand contact to pyridoxal 5'-phosphate. At Lys246 the chain carries N6-(pyridoxal phosphate)lysine. A N(2)-acetyl-L-ornithine-binding site is contributed by Ser274. Position 275 (Thr275) interacts with pyridoxal 5'-phosphate.

This sequence belongs to the class-III pyridoxal-phosphate-dependent aminotransferase family. ArgD subfamily. As to quaternary structure, homodimer. Pyridoxal 5'-phosphate is required as a cofactor.

It localises to the cytoplasm. The enzyme catalyses N(2)-acetyl-L-ornithine + 2-oxoglutarate = N-acetyl-L-glutamate 5-semialdehyde + L-glutamate. It functions in the pathway amino-acid biosynthesis; L-arginine biosynthesis; N(2)-acetyl-L-ornithine from L-glutamate: step 4/4. The polypeptide is Acetylornithine aminotransferase (Streptomyces clavuligerus).